Reading from the N-terminus, the 65-residue chain is Large ribosomal subunit protein bL33c (65 aa).

It belongs to the bacterial ribosomal protein bL33 family.

Its subcellular location is the plastid. It is found in the chloroplast. This chain is Large ribosomal subunit protein bL33c, found in Chaetosphaeridium globosum (Charophycean green alga).